A 560-amino-acid chain; its full sequence is DNA ligase B (560 aa).

Residue K124 is the N6-AMP-lysine intermediate of the active site.

Belongs to the NAD-dependent DNA ligase family. LigB subfamily.

The enzyme catalyses NAD(+) + (deoxyribonucleotide)n-3'-hydroxyl + 5'-phospho-(deoxyribonucleotide)m = (deoxyribonucleotide)n+m + AMP + beta-nicotinamide D-nucleotide.. Its function is as follows. Catalyzes the formation of phosphodiester linkages between 5'-phosphoryl and 3'-hydroxyl groups in double-stranded DNA using NAD as a coenzyme and as the energy source for the reaction. This is DNA ligase B from Escherichia coli O157:H7.